Here is a 637-residue protein sequence, read N- to C-terminus: Cell division cycle-related protein res1/sct1 (637 aa).

The HTH APSES-type domain maps to 6–112 (IHKITYSGVE…YSGSAFMPMS (107 aa)). Residues 37–58 (ATQILKIAELDKPRRTRILEKF) constitute a DNA-binding region (H-T-H motif). A disordered region spans residues 114–137 (FTPQSNRKPTEAYRRNSPVKKSFS). ANK repeat units lie at residues 236 to 265 (DGHT…NVVA) and 357 to 386 (HGDT…SSSI).

As to quaternary structure, DSC1 contains cdc10 and sct1/res1.

Its function is as follows. Acts as a positive regulator of the mitotic cell cycle and as a negative regulator of sexual differentiation. May be involved in the transcriptional regulation of the cdc22 and cdt1 genes. Is an integral component of the DSC1-like complex. This is Cell division cycle-related protein res1/sct1 (res1) from Schizosaccharomyces pombe (strain 972 / ATCC 24843) (Fission yeast).